Here is a 457-residue protein sequence, read N- to C-terminus: Dihydrolipoyl dehydrogenase (457 aa).

FAD contacts are provided by residues 32–40 (EKEYFGGVC), Lys49, and Ala113. An intrachain disulfide couples Cys40 to Cys45. NAD(+)-binding positions include 178–182 (GGGVI), Val235, and 262–265 (SIGR). Residues Asp303 and Ala311 each coordinate FAD. The active-site Proton acceptor is His437.

Belongs to the class-I pyridine nucleotide-disulfide oxidoreductase family. Homodimer. FAD serves as cofactor.

It localises to the cytoplasm. It carries out the reaction N(6)-[(R)-dihydrolipoyl]-L-lysyl-[protein] + NAD(+) = N(6)-[(R)-lipoyl]-L-lysyl-[protein] + NADH + H(+). Its function is as follows. Lipoamide dehydrogenase is a component of the alpha-ketoacid dehydrogenase complexes. The sequence is that of Dihydrolipoyl dehydrogenase (pdhD) from Mycoplasma pneumoniae (strain ATCC 29342 / M129 / Subtype 1) (Mycoplasmoides pneumoniae).